Consider the following 648-residue polypeptide: RAF proto-oncogene serine/threonine-protein kinase (648 aa).

Ser-29 is modified (phosphoserine; by MAPK1). The residue at position 43 (Ser-43) is a Phosphoserine; by PKA and MAPK1. One can recognise an RBD domain in the interval 56–131 (NTIRVFLPNK…IGEELQVDFL (76 aa)). A Phorbol-ester/DAG-type zinc finger spans residues 138–184 (THNFARKTFLKLAFCDICQKFLLNGFRCQTCGYKFHEHCSTKVPTMC). Zn(2+) is bound by residues His-139, Cys-152, Cys-155, Cys-165, Cys-168, His-173, Cys-176, and Cys-184. The interval 205 to 265 (GVPAPPSFPM…RSTSTPNVHM (61 aa)) is disordered. Ser-233 carries the phosphoserine; by PKA modification. Positions 239–265 (TFNTSSPSSEGSLSQRQRSTSTPNVHM) are enriched in polar residues. Ser-252 is subject to Phosphoserine. Ser-259 carries the post-translational modification Phosphoserine; by PKA, PKC and PKB/AKT1. The residue at position 268 (Thr-268) is a Phosphothreonine; by autocatalysis. Thr-269 carries the post-translational modification Phosphothreonine; by PKA. The disordered stretch occupies residues 281 to 335 (IRSHSESASPSALSSSPNNLSPTGWSQPKTPVPAQRERAPGSGTQEKNKIRPRGQ). Low complexity predominate over residues 286 to 301 (ESASPSALSSSPNNLS). Phosphoserine; by MAPK1 occurs at positions 289, 296, and 301. The segment at 331–349 (RPRGQRDSSYYWEIEASEV) is interaction with PEBP1/RKIP. Phosphoserine; by PAK1, PAK2, PAK3 and PAK5 is present on Ser-338. Ser-339 is subject to Phosphoserine; by PAK1, PAK2 and PAK3. Residues Tyr-340 and Tyr-341 each carry the phosphotyrosine; by SRC modification. Residues 349 to 609 (VMLSTRIGSG…PQILSSIELL (261 aa)) enclose the Protein kinase domain. ATP-binding positions include 355-363 (IGSGSFGTV) and Lys-375. Asp-468 (proton acceptor) is an active-site residue. At Ser-471 the chain carries Phosphoserine. Thr-491 is subject to Phosphothreonine. Ser-494 is subject to Phosphoserine. Ser-497 and Ser-499 each carry phosphoserine; by PKC. Arg-563 carries the symmetric dimethylarginine; by PRMT5 modification. Ser-621 carries the phosphoserine modification. At Ser-642 the chain carries Phosphoserine; by MAPK1.

This sequence belongs to the protein kinase superfamily. TKL Ser/Thr protein kinase family. RAF subfamily. Monomer. Homodimer. Heterodimerizes with BRAF and this heterodimer possesses a highly increased kinase activity compared to the respective homodimers or monomers. Heterodimerization is mitogen-regulated and enhanced by 14-3-3 proteins. MAPK1/ERK2 activation can induce a negative feedback that promotes the dissociation of the heterodimer. Forms a multiprotein complex with Ras (M-Ras/MRAS), SHOC2 and protein phosphatase 1 (PPP1CA, PPP1CB and PPP1CC). Interacts with LZTR1. Interacts with Ras proteins; the interaction is antagonized by RIN1. Weakly interacts with RIT1. Interacts (via N-terminus) with RGS14 (via RBD domains); the interaction mediates the formation of a ternary complex with BRAF, a ternary complex inhibited by GNAI1. Probably forms a complex composed of chaperones HSP90 and HSP70, co-chaperones CDC37, PPP5C, TSC1 and client protein TSC2, CDK4, AKT, RAF1 and NR3C1; this complex does not contain co-chaperones STIP1/HOP and PTGES3/p23. Interacts with STK3/MST2; the interaction inhibits its pro-apoptotic activity. Interacts (when phosphorylated at Ser-259) with YWHAZ (unphosphorylated at 'Thr-232'). Interacts with MAP2K1/MEK1 and MAP2K2/MEK2. Interacts with MAP3K5/ASF1 (via N-terminus) and this interaction inhibits the proapoptotic function of MAP3K5/ASK1. Interacts with PAK1 (via kinase domain). The Ser-338 and Ser-339 phosphorylated form (by PAK1) interacts with BCL2. Interacts with PEBP1/RKIP and this interaction is enhanced if RAF1 is phosphorylated on residues Ser-338, Ser-339, Tyr-340 and Tyr-341. Interacts with ADCY2, ADCY5, ADCY6, DGKH, RCAN1/DSCR1, PPP1R12A, PKB/AKT1, SPRY2, SPRY4, CNKSR1/CNK1, KSR2 and PHB/prohibitin. The phosphorylated form interacts with PIN1. Interacts with PPP2CA, PPP2R1B and ROCK2. In its active form, interacts with PRMT5. Interacts with FAM83B; displaces 14-3-3 proteins from RAF1 and activates RAF1. Interacts with PDE8A; the interaction promotes RAF1 activity. Interacts with MFHAS1. Interacts with GLS. Interacts with NEK10 and MAP2K1; the interaction is direct with NEK10 and required for ERK1/2-signaling pathway activation in response to UV irradiation. Requires Zn(2+) as cofactor. In terms of processing, phosphorylation at Thr-269, Ser-338, Tyr-341, Thr-491 and Ser-494 results in its activation. Phosphorylation at Ser-29, Ser-43, Ser-289, Ser-296, Ser-301 and Ser-642 by MAPK1/ERK2 results in its inactivation. Phosphorylation at Ser-259 induces the interaction with YWHAZ and inactivates kinase activity. Dephosphorylation of Ser-259 by the SHOC2-MRAS-PP1c (SMP) complex consisting of SHOC2, GTP-bound M-Ras/MRAS and the catalytic subunit of protein phosphatase 1 (PPP1CA, PPP1CB or PPP1CC); this relieves inactivation and stimulates kinase activity. Phosphorylation at Ser-338 by PAK1 and PAK5 and Ser-339 by PAK1 is required for its mitochondrial localization. Phosphorylation at Ser-621 in response to growth factor treatment stabilizes the protein, possibly by preventing proteasomal degradation. Phosphorylation at Ser-289, Ser-296, Ser-301, Ser-338 and Ser-621 are somehow linked to the methylation potential of cells. Treatment of cells with HGF in the presence of the methylation inhibitor 5'-methylthioadenosine (MTA) results in increased phosphorylation at Ser-338 and Ser-621 and decreased phosphorylation at Ser-296, Ser-301 and Ser-338. Dephosphorylation at Ser-338 by PPP5C results in a decreased of activity. Post-translationally, methylated at Arg-563 in response to EGF treatment. This modification leads to destabilization of the protein, possibly through proteasomal degradation. Present in all tissues tested: testis, ovary, small intestine, colon, peripheral blood leukocytes, fetal liver, bone marrow, thymus, lymph node and spleen, and the cell lines melanoma G-361, lung carcinoma A-549, colorectal adenocarcinoma SW480, Burkitt's lymphoma Raji and lymphoblastic leukemia MOLT-4. In skeletal muscle, isoform 1 is more abundant than isoform 2.

The protein resides in the cytoplasm. It localises to the cell membrane. The protein localises to the mitochondrion. It is found in the nucleus. The enzyme catalyses L-seryl-[protein] + ATP = O-phospho-L-seryl-[protein] + ADP + H(+). It carries out the reaction L-threonyl-[protein] + ATP = O-phospho-L-threonyl-[protein] + ADP + H(+). Its activity is regulated as follows. Regulation is a highly complex process involving membrane recruitment, protein-protein interactions, dimerization, and phosphorylation/dephosphorylation events. Ras-GTP recruits RAF1 to the membrane, thereby promoting its activation. The inactive conformation of RAF1 is maintained by autoinhibitory interactions occurring between the N-terminal regulatory and the C-terminal catalytic domains and by the binding of a 14-3-3 protein that contacts two phosphorylation sites, Ser-259 and Ser-621. Upon mitogenic stimulation, Ras and PPP2R1A cooperate to release autoinhibition and the subsequent phosphorylation of activating sites: Ser-338, Tyr-341, Thr-491, and Ser-494, yields a fully active kinase. Through a negative feedback mechanism involving MAPK1/ERK2, RAF1 is phosphorylated on Ser-29, Ser-43, Ser-289, Ser-296, Ser-301 and Ser-642 by MAPK1/ERK2, which yields an inactive, desensitized kinase. The signaling-competent conformation of RAF1 is finally re-established by the coordinated action of PIN1, a prolyl isomerase that converts pSer and pThr residues from the cis to the trans conformation, which is preferentially recognized and dephosphorylated by PPP2R1A. Activated by homodimerization and heterodimerization (with BRAF). Also regulated through association with other proteins such as KSR2, CNKSR1/CNK1, PEBP1/RKIP, PHB/prohibitin and SPRY4. PEBP1/RKIP acts by dissociating RAF1 from its substrates MAP2K1/MEK1 and MAP2K2/MEK2. PHB/prohibitin facilitates the displacement of 14-3-3 from RAF1 by activated Ras, thereby promoting cell membrane localization and phosphorylation of RAF1 at the activating Ser-338. SPRY4 inhibits Ras-independent, but not Ras-dependent, activation of RAF1. CNKSR1/CNK1 regulates Src-mediated RAF1 activation. Its function is as follows. Serine/threonine-protein kinase that acts as a regulatory link between the membrane-associated Ras GTPases and the MAPK/ERK cascade, and this critical regulatory link functions as a switch determining cell fate decisions including proliferation, differentiation, apoptosis, survival and oncogenic transformation. RAF1 activation initiates a mitogen-activated protein kinase (MAPK) cascade that comprises a sequential phosphorylation of the dual-specific MAPK kinases (MAP2K1/MEK1 and MAP2K2/MEK2) and the extracellular signal-regulated kinases (MAPK3/ERK1 and MAPK1/ERK2). The phosphorylated form of RAF1 (on residues Ser-338 and Ser-339, by PAK1) phosphorylates BAD/Bcl2-antagonist of cell death at 'Ser-75'. Phosphorylates adenylyl cyclases: ADCY2, ADCY5 and ADCY6, resulting in their activation. Phosphorylates PPP1R12A resulting in inhibition of the phosphatase activity. Phosphorylates TNNT2/cardiac muscle troponin T. Can promote NF-kB activation and inhibit signal transducers involved in motility (ROCK2), apoptosis (MAP3K5/ASK1 and STK3/MST2), proliferation and angiogenesis (RB1). Can protect cells from apoptosis also by translocating to the mitochondria where it binds BCL2 and displaces BAD/Bcl2-antagonist of cell death. Plays a role in the oncogenic transformation of epithelial cells via repression of the TJ protein, occludin (OCLN) by inducing the up-regulation of a transcriptional repressor SNAI2/SLUG, which induces down-regulation of OCLN. Restricts caspase activation in response to selected stimuli, notably Fas stimulation, pathogen-mediated macrophage apoptosis, and erythroid differentiation. Regulates Rho signaling and migration, and is required for normal wound healing. The polypeptide is RAF proto-oncogene serine/threonine-protein kinase (Raf1) (Mus musculus (Mouse)).